A 212-amino-acid chain; its full sequence is Peptide methionine sulfoxide reductase MsrA (212 aa).

Cys-52 is an active-site residue.

Belongs to the MsrA Met sulfoxide reductase family.

The enzyme catalyses L-methionyl-[protein] + [thioredoxin]-disulfide + H2O = L-methionyl-(S)-S-oxide-[protein] + [thioredoxin]-dithiol. It carries out the reaction [thioredoxin]-disulfide + L-methionine + H2O = L-methionine (S)-S-oxide + [thioredoxin]-dithiol. Has an important function as a repair enzyme for proteins that have been inactivated by oxidation. Catalyzes the reversible oxidation-reduction of methionine sulfoxide in proteins to methionine. The polypeptide is Peptide methionine sulfoxide reductase MsrA (Shigella boydii serotype 4 (strain Sb227)).